The primary structure comprises 495 residues: L-2,4-diaminobutyrate decarboxylase (495 aa).

Position 312 is an N6-(pyridoxal phosphate)lysine (lysine 312).

It belongs to the group II decarboxylase family. The cofactor is pyridoxal 5'-phosphate.

It carries out the reaction L-2,4-diaminobutanoate + H(+) = propane-1,3-diamine + CO2. The protein operates within siderophore biosynthesis; rhizobactin biosynthesis. This Rhizobium meliloti (strain 1021) (Ensifer meliloti) protein is L-2,4-diaminobutyrate decarboxylase (rhbB).